We begin with the raw amino-acid sequence, 310 residues long: Low-salt glycan biosynthesis protein Agl12 (310 aa).

NAD(+)-binding positions include 7 to 13 (GGAGFIG), 32 to 35 (DALT), and 58 to 59 (DI). Ser82 contacts substrate. Thr97 contacts NAD(+). Substrate is bound by residues Thr122 and 122–124 (TDE). The active-site Proton donor is Asp123. Catalysis depends on proton acceptor residues Glu124 and Tyr146. NAD(+) is bound at residue 146 to 150 (YSATK). Asn175 contributes to the substrate binding site. Asn176 contributes to the NAD(+) binding site. Substrate contacts are provided by residues 185–186 (KL), 201–203 (PVY), Arg210, Asn245, and 269–272 (RAGH).

It belongs to the NAD(P)-dependent epimerase/dehydratase family. dTDP-glucose dehydratase subfamily. Requires NAD(+) as cofactor.

Its pathway is protein modification; protein glycosylation. The protein operates within cell surface structure biogenesis; S-layer biogenesis. Lyase involved in N-glycan biosynthetic pathway that takes place under low-salt conditions (1.75 M instead of 3.4 M). Participates in the formation of the tetrasaccharide present at 'Asn-532' of S-layer glycoprotein Csg, consisting of a sulfated hexose, 2 hexoses and rhamnose. Involved in the addition of final rhamnose (sugar 4) of the tetrasaccharide on the dolichol phosphate carrier. The polypeptide is Low-salt glycan biosynthesis protein Agl12 (agl12) (Haloferax volcanii (strain ATCC 29605 / DSM 3757 / JCM 8879 / NBRC 14742 / NCIMB 2012 / VKM B-1768 / DS2) (Halobacterium volcanii)).